The primary structure comprises 98 residues: Co-chaperonin GroES (98 aa).

Belongs to the GroES chaperonin family. As to quaternary structure, heptamer of 7 subunits arranged in a ring. Interacts with the chaperonin GroEL.

The protein resides in the cytoplasm. Functionally, together with the chaperonin GroEL, plays an essential role in assisting protein folding. The GroEL-GroES system forms a nano-cage that allows encapsulation of the non-native substrate proteins and provides a physical environment optimized to promote and accelerate protein folding. GroES binds to the apical surface of the GroEL ring, thereby capping the opening of the GroEL channel. This chain is Co-chaperonin GroES, found in Brucella abortus (strain S19).